Here is a 308-residue protein sequence, read N- to C-terminus: Aspartate carbamoyltransferase catalytic subunit (308 aa).

Carbamoyl phosphate contacts are provided by R55 and T56. K83 lines the L-aspartate pocket. R105, H133, and Q136 together coordinate carbamoyl phosphate. Residues R166 and R220 each contribute to the L-aspartate site. Carbamoyl phosphate is bound by residues G261 and P262.

The protein belongs to the aspartate/ornithine carbamoyltransferase superfamily. ATCase family. In terms of assembly, heterododecamer (2C3:3R2) of six catalytic PyrB chains organized as two trimers (C3), and six regulatory PyrI chains organized as three dimers (R2).

The catalysed reaction is carbamoyl phosphate + L-aspartate = N-carbamoyl-L-aspartate + phosphate + H(+). It participates in pyrimidine metabolism; UMP biosynthesis via de novo pathway; (S)-dihydroorotate from bicarbonate: step 2/3. Functionally, catalyzes the condensation of carbamoyl phosphate and aspartate to form carbamoyl aspartate and inorganic phosphate, the committed step in the de novo pyrimidine nucleotide biosynthesis pathway. The chain is Aspartate carbamoyltransferase catalytic subunit from Chlorobium phaeobacteroides (strain DSM 266 / SMG 266 / 2430).